Consider the following 443-residue polypeptide: Arginine biosynthesis bifunctional protein ArgJ, mitochondrial (443 aa).

T179, K206, T217, E303, N438, and S443 together coordinate substrate. T217 (nucleophile) is an active-site residue.

It belongs to the ArgJ family. As to quaternary structure, heterodimer of an alpha and a beta chain. The alpha and beta chains are autoproteolytically processed from a single precursor protein within the mitochondrion.

The protein localises to the mitochondrion matrix. It carries out the reaction N(2)-acetyl-L-ornithine + L-glutamate = N-acetyl-L-glutamate + L-ornithine. The catalysed reaction is L-glutamate + acetyl-CoA = N-acetyl-L-glutamate + CoA + H(+). It functions in the pathway amino-acid biosynthesis; L-arginine biosynthesis; L-ornithine and N-acetyl-L-glutamate from L-glutamate and N(2)-acetyl-L-ornithine (cyclic): step 1/1. It participates in amino-acid biosynthesis; L-arginine biosynthesis; N(2)-acetyl-L-ornithine from L-glutamate: step 1/4. Its function is as follows. Catalyzes two activities which are involved in the cyclic version of arginine biosynthesis: the synthesis of acetylglutamate from glutamate and acetyl-CoA, and of ornithine by transacetylation between acetylornithine and glutamate. This is Arginine biosynthesis bifunctional protein ArgJ, mitochondrial from Eremothecium gossypii (strain ATCC 10895 / CBS 109.51 / FGSC 9923 / NRRL Y-1056) (Yeast).